We begin with the raw amino-acid sequence, 149 residues long: Transcriptional repressor NrdR (149 aa).

A zinc finger lies at 3-34 (CPFCGTQDTKVIDSRLVADGASVRRRRECNHC). The ATP-cone domain occupies 49-139 (PRVIKTDGSR…VYRSFEDIRE (91 aa)).

The protein belongs to the NrdR family. The cofactor is Zn(2+).

In terms of biological role, negatively regulates transcription of bacterial ribonucleotide reductase nrd genes and operons by binding to NrdR-boxes. In Idiomarina loihiensis (strain ATCC BAA-735 / DSM 15497 / L2-TR), this protein is Transcriptional repressor NrdR.